Reading from the N-terminus, the 439-residue chain is Ribosomal protein uS12 methylthiotransferase RimO (439 aa).

In terms of domain architecture, MTTase N-terminal spans 7–119 (KQLCLISLGC…IDIMIAKKQN (113 aa)). The [4Fe-4S] cluster site is built by Cys-16, Cys-50, Cys-82, Cys-151, Cys-155, and Cys-158. A Radical SAM core domain is found at 137-368 (TGSSVHAYVK…ALKHQNHSFK (232 aa)).

This sequence belongs to the methylthiotransferase family. RimO subfamily. It depends on [4Fe-4S] cluster as a cofactor.

It localises to the cytoplasm. The catalysed reaction is L-aspartate(89)-[ribosomal protein uS12]-hydrogen + (sulfur carrier)-SH + AH2 + 2 S-adenosyl-L-methionine = 3-methylsulfanyl-L-aspartate(89)-[ribosomal protein uS12]-hydrogen + (sulfur carrier)-H + 5'-deoxyadenosine + L-methionine + A + S-adenosyl-L-homocysteine + 2 H(+). Functionally, catalyzes the methylthiolation of an aspartic acid residue of ribosomal protein uS12. The polypeptide is Ribosomal protein uS12 methylthiotransferase RimO (Helicobacter pylori (strain G27)).